The following is a 476-amino-acid chain: Glutamate--tRNA ligase 1 (476 aa).

Residues P9 to G19 carry the 'HIGH' region motif. Positions K238–R242 match the 'KMSKS' region motif. K241 lines the ATP pocket.

It belongs to the class-I aminoacyl-tRNA synthetase family. Glutamate--tRNA ligase type 1 subfamily. Monomer.

The protein localises to the cytoplasm. The catalysed reaction is tRNA(Glu) + L-glutamate + ATP = L-glutamyl-tRNA(Glu) + AMP + diphosphate. Functionally, catalyzes the attachment of glutamate to tRNA(Glu) in a two-step reaction: glutamate is first activated by ATP to form Glu-AMP and then transferred to the acceptor end of tRNA(Glu). The polypeptide is Glutamate--tRNA ligase 1 (Bartonella tribocorum (strain CIP 105476 / IBS 506)).